Reading from the N-terminus, the 303-residue chain is Glucose-1-phosphate thymidylyltransferase (303 aa).

Positions 108 and 222 each coordinate Mg(2+).

Belongs to the glucose-1-phosphate thymidylyltransferase family. The cofactor is Mg(2+).

It carries out the reaction dTTP + alpha-D-glucose 1-phosphate + H(+) = dTDP-alpha-D-glucose + diphosphate. Its function is as follows. Catalyzes the formation of dTDP-glucose, from dTTP and glucose 1-phosphate, as well as its pyrophosphorolysis. In terms of biological role, probably involved in the biosynthesis of the acarviose moiety of the alpha-glucosidase inhibitor acarbose. This chain is Glucose-1-phosphate thymidylyltransferase (acbA), found in Actinoplanes sp. (strain ATCC 31044 / CBS 674.73 / SE50/110).